A 357-amino-acid chain; its full sequence is tRNA-specific 2-thiouridylase MnmA (357 aa).

ATP-binding positions include 7–14 (GMSGGVDS) and Met-33. Cys-103 serves as the catalytic Nucleophile. Cysteines 103 and 200 form a disulfide. An ATP-binding site is contributed by Gly-127. An interaction with tRNA region spans residues 150-152 (KDQ). Residue Cys-200 is the Cysteine persulfide intermediate of the active site. The tract at residues 306–307 (RY) is interaction with tRNA.

Belongs to the MnmA/TRMU family.

It localises to the cytoplasm. The enzyme catalyses S-sulfanyl-L-cysteinyl-[protein] + uridine(34) in tRNA + AH2 + ATP = 2-thiouridine(34) in tRNA + L-cysteinyl-[protein] + A + AMP + diphosphate + H(+). Its function is as follows. Catalyzes the 2-thiolation of uridine at the wobble position (U34) of tRNA, leading to the formation of s(2)U34. The polypeptide is tRNA-specific 2-thiouridylase MnmA (Lachnoclostridium phytofermentans (strain ATCC 700394 / DSM 18823 / ISDg) (Clostridium phytofermentans)).